The following is a 317-amino-acid chain: Olfactory receptor 10AD1 (317 aa).

At 1–25 the chain is on the extracellular side; sequence MLRNGSIVTEFILVGFQQSSTSTRA. Residue asparagine 4 is glycosylated (N-linked (GlcNAc...) asparagine). Residues 26–46 traverse the membrane as a helical segment; it reads LLFALFLALYSLTMAMNGLII. Residues 47–55 lie on the Cytoplasmic side of the membrane; the sequence is FITSWTDPK. A helical membrane pass occupies residues 56-76; it reads LNSPMYFFLGHLSLLDVCFIT. At 77–100 the chain is on the extracellular side; it reads TTIPQMLIHLVVRDHIVSFVCCMT. Residues cysteine 98 and cysteine 190 are joined by a disulfide bond. The chain crosses the membrane as a helical span at residues 101–121; sequence QMYFVFCVGVAECILLAFMAY. At 122 to 140 the chain is on the cytoplasmic side; sequence DRYVAICYPLNYVPIISQK. The chain crosses the membrane as a helical span at residues 141 to 161; the sequence is VCVRLVGTAWFFGLINGIFLE. Residues 162 to 198 lie on the Extracellular side of the membrane; sequence YISFREPFRRDNHIESFFCEAPIVIGLSCGDPQFSLW. A helical membrane pass occupies residues 199–218; sequence AIFADAIVVILSPMVLTVTS. Topologically, residues 219 to 238 are cytoplasmic; that stretch reads YVHILATILSKASSSGRGKT. A helical membrane pass occupies residues 239 to 259; it reads FSTCASHLTVVIFLYTSAMFS. Topologically, residues 260 to 272 are extracellular; the sequence is YMNPHSTHGPDKD. Residues 273-293 traverse the membrane as a helical segment; it reads KPFSLLYTIITPMCNPIIYSF. Residues 294 to 317 are Cytoplasmic-facing; sequence RNKEIKEAMVRALGRTRLAQPQSV.

It belongs to the G-protein coupled receptor 1 family.

The protein resides in the cell membrane. Odorant receptor. This is Olfactory receptor 10AD1 (OR10AD1) from Homo sapiens (Human).